The sequence spans 324 residues: Beta-ketoacyl-[acyl-carrier-protein] synthase III (324 aa).

Catalysis depends on residues C112 and H250. The ACP-binding stretch occupies residues 251-255 (QANIR). N280 is an active-site residue.

Belongs to the thiolase-like superfamily. FabH family. In terms of assembly, homodimer.

The protein localises to the cytoplasm. The catalysed reaction is malonyl-[ACP] + acetyl-CoA + H(+) = 3-oxobutanoyl-[ACP] + CO2 + CoA. It functions in the pathway lipid metabolism; fatty acid biosynthesis. Its function is as follows. Catalyzes the condensation reaction of fatty acid synthesis by the addition to an acyl acceptor of two carbons from malonyl-ACP. Catalyzes the first condensation reaction which initiates fatty acid synthesis and may therefore play a role in governing the total rate of fatty acid production. Possesses both acetoacetyl-ACP synthase and acetyl transacylase activities. Its substrate specificity determines the biosynthesis of branched-chain and/or straight-chain of fatty acids. The polypeptide is Beta-ketoacyl-[acyl-carrier-protein] synthase III (Clostridium novyi (strain NT)).